The chain runs to 315 residues: Methionyl-tRNA formyltransferase (315 aa).

(6S)-5,6,7,8-tetrahydrofolate is bound at residue 110 to 113 (SLLP).

It belongs to the Fmt family.

It catalyses the reaction L-methionyl-tRNA(fMet) + (6R)-10-formyltetrahydrofolate = N-formyl-L-methionyl-tRNA(fMet) + (6S)-5,6,7,8-tetrahydrofolate + H(+). Attaches a formyl group to the free amino group of methionyl-tRNA(fMet). The formyl group appears to play a dual role in the initiator identity of N-formylmethionyl-tRNA by promoting its recognition by IF2 and preventing the misappropriation of this tRNA by the elongation apparatus. The chain is Methionyl-tRNA formyltransferase from Cutibacterium acnes (strain DSM 16379 / KPA171202) (Propionibacterium acnes).